The primary structure comprises 74 residues: MKKQKSIDKHQLKDGLQSDIKAKLMEMKSQLKEEDEKRQKREKAEQIRKKKEIEKNKSFEELLNESQMDWHQYK.

Basic and acidic residues-rich tracts occupy residues 1-13 (MKKQ…HQLK) and 20-60 (IKAK…KSFE). Residues 1 to 74 (MKKQKSIDKH…ESQMDWHQYK (74 aa)) form a disordered region. A compositionally biased stretch (polar residues) spans 64 to 74 (NESQMDWHQYK).

This is an uncharacterized protein from Bacillus subtilis (strain 168).